Consider the following 372-residue polypeptide: 3-dehydroquinate synthase (372 aa).

NAD(+) is bound by residues 113–117 (GVIGD), 137–138 (TS), lysine 150, lysine 159, and 177–180 (TLKT). Zn(2+)-binding residues include glutamate 192, histidine 257, and histidine 274.

Belongs to the sugar phosphate cyclases superfamily. Dehydroquinate synthase family. It depends on Co(2+) as a cofactor. Zn(2+) serves as cofactor. Requires NAD(+) as cofactor.

The protein resides in the cytoplasm. It carries out the reaction 7-phospho-2-dehydro-3-deoxy-D-arabino-heptonate = 3-dehydroquinate + phosphate. It participates in metabolic intermediate biosynthesis; chorismate biosynthesis; chorismate from D-erythrose 4-phosphate and phosphoenolpyruvate: step 2/7. Functionally, catalyzes the conversion of 3-deoxy-D-arabino-heptulosonate 7-phosphate (DAHP) to dehydroquinate (DHQ). The protein is 3-dehydroquinate synthase of Acaryochloris marina (strain MBIC 11017).